A 447-amino-acid chain; its full sequence is Gamma-glutamyl phosphate reductase (447 aa).

It belongs to the gamma-glutamyl phosphate reductase family.

It localises to the cytoplasm. It catalyses the reaction L-glutamate 5-semialdehyde + phosphate + NADP(+) = L-glutamyl 5-phosphate + NADPH + H(+). It functions in the pathway amino-acid biosynthesis; L-proline biosynthesis; L-glutamate 5-semialdehyde from L-glutamate: step 2/2. Functionally, catalyzes the NADPH-dependent reduction of L-glutamate 5-phosphate into L-glutamate 5-semialdehyde and phosphate. The product spontaneously undergoes cyclization to form 1-pyrroline-5-carboxylate. The protein is Gamma-glutamyl phosphate reductase of Methanosarcina mazei (strain ATCC BAA-159 / DSM 3647 / Goe1 / Go1 / JCM 11833 / OCM 88) (Methanosarcina frisia).